The primary structure comprises 718 residues: MSRGYSENNNFLNNNNQMVLDMILYPLIGIPQTINWETIARLVPGLTPKECAKRFDELKSSGSSPVDNQYNSLMAAGESPVETLATYIKSSLLDIHGEFQETPVGHDAVSKTGRHSIASTRNCSSESENCTTHNGGEMTEESEGPNMVIHVCDEAKNLKEDFTCPRDLLISEMKYFAEYLSMDAQRWEEVDISVHCDVHIFNWLIKYIKRNTKENKDCEMPTLEPGNVISILISSEFLKMDSLVEQCIQYCHKNMNAIVATPCNMNCINANLLTRIADLFSHNEVDDLKDKKDKFKSKLFCKKIERLFDPEYLNPDSRSNAATLYRCCLCKKLLTKETERRIPCIPGKINVDRRGNIVYIHIRDKTWDVHEYLNSLFEELKSWRDVYWRLWGTINWLTCSRCYQAFLCIEFSHCQYHSETVVYPTAASSLNTVGTGIYPCCNQKVLRFDPTQLTKGCKVRDHMVTLRDQGEGGDLPSCPTARMLDDLHKYRDVIVVPFSKDTVSDVGVGLCDEKGIECDVLLEPNTPWGPKTGELNAFLSLKNWTLQLKQQSLFSEEEEYTTGSEVTEDEVGDEEEVSKKQRKKEKPKKFTRQPKKQVSSPCAQRKEKALEKSASRDVSPFVMSMQKNKWDATRSLRFNQDAQREDDQRRMTEITGHLIKMRLGDLDRVKSKEAKEFAGGIYSRLEAQIKASVPVSARQSSSEKNTRSKSRFGQGRPA.

Positions 21 to 59 (DMILYPLIGIPQTINWETIARLVPGLTPKECAKRFDELK) constitute an SANT domain. The span at 118-134 (ASTRNCSSESENCTTHN) shows a compositional bias: polar residues. The disordered stretch occupies residues 118 to 142 (ASTRNCSSESENCTTHNGGEMTEES). In terms of domain architecture, BTB spans 147-255 (MVIHVCDEAK…QCIQYCHKNM (109 aa)). A compositionally biased stretch (acidic residues) spans 555–576 (SEEEEYTTGSEVTEDEVGDEEE). 2 disordered regions span residues 555–622 (SEEE…SPFV) and 692–718 (SVPVSARQSSSEKNTRSKSRFGQGRPA). Basic residues predominate over residues 580–595 (KQRKKEKPKKFTRQPK). Residues 604 to 615 (QRKEKALEKSAS) are compositionally biased toward basic and acidic residues.

This sequence belongs to the KIAA1841 family. As to quaternary structure, homodimer. Interacts (via the BTB domain) with HDAC1 and NCOR2.

Negatively regulates class switch recombination or isotype switching in splenic B-cells. The polypeptide is SANT and BTB domain regulator of class switch recombination (Homo sapiens (Human)).